A 574-amino-acid polypeptide reads, in one-letter code: DNA polymerase I (574 aa).

A 3'-5' exonuclease domain is found at 4 to 161 (EYVTGEEGLK…ELFPKMRDML (158 aa)).

This sequence belongs to the DNA polymerase type-A family.

It carries out the reaction DNA(n) + a 2'-deoxyribonucleoside 5'-triphosphate = DNA(n+1) + diphosphate. The polypeptide is DNA polymerase I (polA) (Aquifex aeolicus (strain VF5)).